Reading from the N-terminus, the 146-residue chain is MVLPIIIGLGVTMVALSVKSGLNAWTVYKTLSPLTIAKLNNIRIENPTAGYRDALKFKSSLIDEELKNRLNQYQGGFAPRMTEPEALLILDISAREINHLDEKLLKKKHRKAMVRNHPDRGGSPYMAAKINEAKEVLERSVLLRKR.

One can recognise a J domain in the interval 85–146 (EALLILDISA…LERSVLLRKR (62 aa)).

Interacts with PAM16/TIM16 and is recruited by the PAM complex.

It is found in the mitochondrion inner membrane. Plays a role in mitochondrial biogenesis and protein folding. Participates in the translocation of transit peptide-containing proteins from the inner membrane into the mitochondrial matrix in an ATP-dependent manner, probably by stimulating activity of mtHSP70 (SSC1). The sequence is that of Mitochondrial DnaJ homolog 2 (MDJ2) from Saccharomyces cerevisiae (strain ATCC 204508 / S288c) (Baker's yeast).